We begin with the raw amino-acid sequence, 274 residues long: 4-diphosphocytidyl-2-C-methyl-D-erythritol kinase (274 aa).

Residue K10 is part of the active site. Residue 101-111 coordinates ATP; that stretch reads PTQAGLGGGSA. The active site involves D143.

The protein belongs to the GHMP kinase family. IspE subfamily.

It carries out the reaction 4-CDP-2-C-methyl-D-erythritol + ATP = 4-CDP-2-C-methyl-D-erythritol 2-phosphate + ADP + H(+). Its pathway is isoprenoid biosynthesis; isopentenyl diphosphate biosynthesis via DXP pathway; isopentenyl diphosphate from 1-deoxy-D-xylulose 5-phosphate: step 3/6. Its function is as follows. Catalyzes the phosphorylation of the position 2 hydroxy group of 4-diphosphocytidyl-2C-methyl-D-erythritol. The sequence is that of 4-diphosphocytidyl-2-C-methyl-D-erythritol kinase from Helicobacter pylori (strain HPAG1).